A 478-amino-acid chain; its full sequence is Transposase for insertion sequence element IS231C (478 aa).

This sequence belongs to the transposase 11 family.

Functionally, involved in the transposition of the insertion sequence. This Bacillus thuringiensis subsp. berliner protein is Transposase for insertion sequence element IS231C.